We begin with the raw amino-acid sequence, 438 residues long: Keratin, type I cytoskeletal 13 (438 aa).

The segment at 1–95 (MSCRFQSSSM…SVDGGLLSGN (95 aa)) is head. Omega-N-methylarginine is present on residues Arg27 and Arg35. Residues 96–131 (EKITMQNLNDRLASYLEKVRALEAANADLEVKIRDW) form a coil region. Residues 96 to 408 (EKITMQNLND…SLLEGQDAKM (313 aa)) form the IF rod domain. The linker 1 stretch occupies residues 132–150 (HLKQSPTSPERDYSAYYKT). The interval 151–242 (IEELRIKILE…KNHEEEMKEF (92 aa)) is coil 1B. The linker 12 stretch occupies residues 243–265 (SNQAVGQVNVEMDATPGIDLTRV). Residues 266–404 (LAEMREQYEA…ATYRSLLEGQ (139 aa)) form a coil 2 region. The segment at 405-438 (DAKMTGFNTGGNSTTTSNTSTSPSTSGRPDFRKY) is tail. Positions 408–438 (MTGFNTGGNSTTTSNTSTSPSTSGRPDFRKY) are disordered. The segment covering 409–431 (TGFNTGGNSTTTSNTSTSPSTSG) has biased composition (low complexity).

This sequence belongs to the intermediate filament family. As to quaternary structure, heterotetramer of two type I and two type II keratins. Post-translationally, O-glycosylated; glycans consist of single N-acetylglucosamine residues.

In terms of biological role, type 1 keratin. Maintains postnatal tongue mucosal cell homeostasis and tissue organization in response to mechanical stress, potentially via regulation of the G1/S phase cyclins CCNE1 and CCNE2. This is Keratin, type I cytoskeletal 13 from Rattus norvegicus (Rat).